We begin with the raw amino-acid sequence, 186 residues long: Nascent polypeptide-associated complex subunit beta (186 aa).

Residues 65 to 130 (GADDKKLQTT…GEEKELTELV (66 aa)) form the NAC-A/B domain. The tract at residues 153 to 186 (QNMQKQAGAEGKKDEDEDDIPDLVEGENFESNVE) is disordered. Residues 167–186 (EDEDDIPDLVEGENFESNVE) show a composition bias toward acidic residues.

This sequence belongs to the NAC-beta family. As to quaternary structure, part of the nascent polypeptide-associated complex (NAC), consisting of egd2 and egd1. NAC associates with ribosomes via egd1.

The protein localises to the cytoplasm. The protein resides in the nucleus. Its function is as follows. Component of the nascent polypeptide-associated complex (NAC), a dynamic component of the ribosomal exit tunnel, protecting the emerging polypeptides from interaction with other cytoplasmic proteins to ensure appropriate nascent protein targeting. The NAC complex also promotes mitochondrial protein import by enhancing productive ribosome interactions with the outer mitochondrial membrane and blocks the inappropriate interaction of ribosomes translating non-secretory nascent polypeptides with translocation sites in the membrane of the endoplasmic reticulum. EGD1 may act as a transcription factor that exert a negative effect on the expression of several genes that are transcribed by RNA polymerase II. The protein is Nascent polypeptide-associated complex subunit beta (egd1) of Aspergillus fumigatus (strain ATCC MYA-4609 / CBS 101355 / FGSC A1100 / Af293) (Neosartorya fumigata).